The primary structure comprises 106 residues: Transcriptional and immune response regulator (106 aa).

Monomer. Interacts with NOTCH2 (via ANK repeats), the interaction inhibits the nuclear translocation of NOTCH2 N2ICD. Interacts (C-terminus) with CBY1 (C-terminus), TCIM competes with CTNNB1 for the interaction with CBY1.

The protein resides in the cytoplasm. It is found in the nucleus. It localises to the nucleolus. Its subcellular location is the nucleus speckle. In terms of biological role, seems to be involved in the regulation of cell growth an differentiation, may play different and opposite roles depending on the tissue or cell type. May enhance the WNT-CTNNB1 pathway by relieving antagonistic activity of CBY1. Enhances the proliferation of follicular dendritic cells. Plays a role in the mitogen-activated MAPK2/3 signaling pathway, positively regulates G1-to-S-phase transition of the cell cycle. In endothelial cells, enhances key inflammatory mediators and inflammatory response through the modulation of NF-kappaB transcriptional regulatory activity. Involved in the regulation of heat shock response, seems to play a positive feedback with HSF1 to modulate heat-shock downstream gene expression. Plays a role in the regulation of hematopoiesis even if the mechanisms are unknown. In cancers such as thyroid or lung cancer, it has been described as promoter of cell proliferation, G1-to-S-phase transition and inhibitor of apoptosis. However, it negatively regulates self-renewal of liver cancer cells via suppresion of NOTCH2 signaling. This is Transcriptional and immune response regulator (TCIM) from Bos taurus (Bovine).